Consider the following 428-residue polypeptide: AP-1 complex subunit mu-2 (428 aa).

Positions 170-426 (KNEVFLDVIE…ITMAGEYELR (257 aa)) constitute an MHD domain.

The protein belongs to the adaptor complexes medium subunit family. In terms of assembly, adaptor protein complex 1 (AP-1) is a heterotetramer composed of two large adaptins (gamma-type subunit and beta-type subunit), a medium adaptin (mu-type subunit) and a small adaptin (sigma-type subunit). Ubiquitous.

The protein localises to the golgi apparatus. It localises to the trans-Golgi network membrane. The protein resides in the early endosome membrane. Its subcellular location is the cytoplasmic vesicle. It is found in the clathrin-coated vesicle membrane. In terms of biological role, subunit of clathrin-associated adaptor protein complex 1 that plays a role in protein sorting at the trans-Golgi network and early endosomes (TGN/EE). The AP complexes mediate the recruitment of clathrin to membranes and the recognition of sorting signals within the cytosolic tails of transmembrane cargo molecules. Required for KNOLLE localization at the cell plate to mediate cytokinesis. Functions redundantly with AP1M1 in multiple post-Golgi trafficking pathways leading from the TGN to the vacuole, the plasma membrane, and the cell-division plane. The polypeptide is AP-1 complex subunit mu-2 (AP1M2) (Arabidopsis thaliana (Mouse-ear cress)).